The sequence spans 276 residues: C-type lectin domain family 12 member B (276 aa).

At 1-43 (MSEDMTYATLTFQDSVAAGNNQDRNNLRKRGYPAPSSIWRQAA) the chain is on the cytoplasmic side. Positions 5–10 (MTYATL) match the ITIM motif motif. Tyr-7 carries the phosphotyrosine modification. The chain crosses the membrane as a helical; Signal-anchor for type II membrane protein span at residues 44–64 (LGLLTLCVMLLIGLVTLGIMF). The Extracellular segment spans residues 65–276 (LQMSSEINSD…AALVKIEDLD (212 aa)). Asn-91, Asn-176, and Asn-237 each carry an N-linked (GlcNAc...) asparagine glycan. Residues 150-264 (YQTSCYYFAV…CSAEISWICE (115 aa)) form the C-type lectin domain. Disulfide bonds link Cys-172–Cys-263 and Cys-242–Cys-255.

Homodimer. Interacts (via ITIM motif) with PTPN6. Interacts (via ITIM motif) with PTPN11; this interaction triggers dephosphorylation and activation of PTPN11.

It localises to the cell membrane. In terms of biological role, inhibitory receptor postulated to negatively regulate immune and non-immune functions. Upon phosphorylation, recruits SH2 domain-containing PTPN6 and PTPN11 phosphatases to its ITIM motif and antagonizes activation signals. Although it inhibits KLRK1/NKG2D-mediated signaling, it does not bind known ligands of KLRK1/NKG2D and therefore is not its inhibitory counterpart. May limit activation of myeloid cell subsets in response to infection or tissue inflammation. May protect target cells against natural killer cell-mediated lysis. May negatively regulate cell cycle and differentiation of melanocytes via inactivation of STAT3. This chain is C-type lectin domain family 12 member B (CLEC12B), found in Bos taurus (Bovine).